A 575-amino-acid chain; its full sequence is Adenine deaminase (575 aa).

Belongs to the metallo-dependent hydrolases superfamily. Adenine deaminase family. Mn(2+) serves as cofactor.

The enzyme catalyses adenine + H2O + H(+) = hypoxanthine + NH4(+). This chain is Adenine deaminase, found in Nitratidesulfovibrio vulgaris (strain ATCC 29579 / DSM 644 / CCUG 34227 / NCIMB 8303 / VKM B-1760 / Hildenborough) (Desulfovibrio vulgaris).